A 216-amino-acid chain; its full sequence is Sperm microtubule inner protein 8 (216 aa).

Microtubule inner protein component of sperm flagellar doublet microtubules. In terms of tissue distribution, expressed in sperm.

Its subcellular location is the cytoplasm. The protein resides in the cytoskeleton. The protein localises to the flagellum axoneme. Its function is as follows. Microtubule inner protein (MIP) part of the dynein-decorated doublet microtubules (DMTs) in flagellum axoneme. May serve to reinforce and thus stabilize the microtubule structure in the sperm flagella. The chain is Sperm microtubule inner protein 8 (SPMIP8) from Bos taurus (Bovine).